The chain runs to 504 residues: ATP synthase subunit alpha 2 (504 aa).

Residue 169-176 (GDRQTGKT) coordinates ATP.

It belongs to the ATPase alpha/beta chains family. In terms of assembly, F-type ATPases have 2 components, CF(1) - the catalytic core - and CF(0) - the membrane proton channel. CF(1) has five subunits: alpha(3), beta(3), gamma(1), delta(1), epsilon(1). CF(0) has three main subunits: a(1), b(2) and c(9-12). The alpha and beta chains form an alternating ring which encloses part of the gamma chain. CF(1) is attached to CF(0) by a central stalk formed by the gamma and epsilon chains, while a peripheral stalk is formed by the delta and b chains.

It localises to the cell membrane. The enzyme catalyses ATP + H2O + 4 H(+)(in) = ADP + phosphate + 5 H(+)(out). In terms of biological role, produces ATP from ADP in the presence of a proton gradient across the membrane. The alpha chain is a regulatory subunit. This is ATP synthase subunit alpha 2 from Listeria monocytogenes serovar 1/2a (strain ATCC BAA-679 / EGD-e).